Reading from the N-terminus, the 540-residue chain is Isocitrate lyase (540 aa).

A substrate-binding site is contributed by 103–105; the sequence is SGW. Mg(2+) is bound at residue D187. The active-site Proton acceptor is the C225. Residues 226 to 227, 385 to 389, and T458 contribute to the substrate site; these read GH and NNSPS.

It belongs to the isocitrate lyase/PEP mutase superfamily. Isocitrate lyase family. In terms of assembly, homotetramer. Mg(2+) is required as a cofactor.

It carries out the reaction D-threo-isocitrate = glyoxylate + succinate. The protein operates within carbohydrate metabolism; glyoxylate cycle; (S)-malate from isocitrate: step 1/2. It participates in one-carbon metabolism; formaldehyde assimilation via serine pathway. With respect to regulation, in the presence of magnesium, inhibited by oxalate, potassium cyanide, manganese, silver, cadmium and to a lesser extent by succinate, glycolate, iodoacetamide, DL-penicillamine, aluminum, sodium, potassium, lithium and strontium. Functionally, involved in the metabolic adaptation in response to environmental changes. Catalyzes the reversible formation of succinate and glyoxylate from isocitrate, a key step of the glyoxylate cycle, which operates as an anaplerotic route for replenishing the tricarboxylic acid cycle during growth on fatty acid substrates. May be involved in the assimilation of one-carbon compounds via the isocitrate lyase-positive serine pathway. The sequence is that of Isocitrate lyase from Hyphomicrobium methylovorum.